Here is a 168-residue protein sequence, read N- to C-terminus: Cyanate hydratase (168 aa).

Catalysis depends on residues Arg-94, Glu-97, and Ser-120.

It belongs to the cyanase family.

It catalyses the reaction cyanate + hydrogencarbonate + 3 H(+) = NH4(+) + 2 CO2. Catalyzes the reaction of cyanate with bicarbonate to produce ammonia and carbon dioxide. The protein is Cyanate hydratase of Oryza sativa subsp. indica (Rice).